A 167-amino-acid polypeptide reads, in one-letter code: Effector CFEM8 (167 aa).

A signal peptide spans 1–17; it reads MQFSIVVMAALASLASA. Residues 18-112 form the CFEM domain; that stretch reads QSMDGIPTCA…TPAAAAPYPT (95 aa). Intrachain disulfides connect Cys26–Cys68, Cys30–Cys63, Cys40–Cys47, and Cys49–Cys85. A heme-binding site is contributed by Asp44. 2 N-linked (GlcNAc...) asparagine glycosylation sites follow: Asn117 and Asn135. A lipid anchor (GPI-anchor amidated glycine) is attached at Gly143. The propeptide at 144-167 is removed in mature form; sequence SAPQNVAGGLAGIFGLVVAAAFAL.

It belongs to the RBT5 family.

The protein localises to the cell membrane. The protein resides in the secreted. It is found in the host nucleus. Its subcellular location is the host cell membrane. In terms of biological role, appears to function during host infection, and may play a role in suppressing the host immune response. This is Effector CFEM8 from Marssonina brunnea f. sp. multigermtubi (strain MB_m1) (Marssonina leaf spot fungus).